The primary structure comprises 247 residues: Triosephosphate isomerase (247 aa).

Residue 8–10 coordinates substrate; it reads NWK. The Electrophile role is filled by His94. Catalysis depends on Glu165, which acts as the Proton acceptor. Substrate-binding residues include Gly171 and Ser210.

This sequence belongs to the triosephosphate isomerase family. Homodimer.

It is found in the cytoplasm. It carries out the reaction D-glyceraldehyde 3-phosphate = dihydroxyacetone phosphate. Its pathway is carbohydrate biosynthesis; gluconeogenesis. The protein operates within carbohydrate degradation; glycolysis; D-glyceraldehyde 3-phosphate from glycerone phosphate: step 1/1. Functionally, involved in the gluconeogenesis. Catalyzes stereospecifically the conversion of dihydroxyacetone phosphate (DHAP) to D-glyceraldehyde-3-phosphate (G3P). This Aquifex aeolicus (strain VF5) protein is Triosephosphate isomerase.